A 275-amino-acid polypeptide reads, in one-letter code: uncharacterized protein (275 aa).

This is an uncharacterized protein from Enterobacteria phage T4 (Bacteriophage T4).